The primary structure comprises 440 residues: Proline--tRNA ligase (440 aa).

The protein belongs to the class-II aminoacyl-tRNA synthetase family. ProS type 2 subfamily. Homodimer.

It localises to the cytoplasm. The enzyme catalyses tRNA(Pro) + L-proline + ATP = L-prolyl-tRNA(Pro) + AMP + diphosphate. In terms of biological role, catalyzes the attachment of proline to tRNA(Pro) in a two-step reaction: proline is first activated by ATP to form Pro-AMP and then transferred to the acceptor end of tRNA(Pro). The chain is Proline--tRNA ligase from Rhizobium johnstonii (strain DSM 114642 / LMG 32736 / 3841) (Rhizobium leguminosarum bv. viciae).